The following is a 527-amino-acid chain: Probable pectinesterase/pectinesterase inhibitor 32 (527 aa).

The N-terminal stretch at 1–24 (MAKFRQMGSSIFFLFLIIISLCSA) is a signal peptide. A pectinesterase inhibitor 32 region spans residues 25–165 (HKEAFSSTDL…GTTVRNLLTM (141 aa)). N-linked (GlcNAc...) asparagine glycans are attached at residues N110, N209, N224, and N280. The pectinesterase 32 stretch occupies residues 214 to 511 (DAVVAADGTG…FTVSQLIQGN (298 aa)). Substrate contacts are provided by T289 and Q319. D342 serves as the catalytic Proton donor; for pectinesterase activity. The cysteines at positions 356 and 376 are disulfide-linked. D363 (nucleophile; for pectinesterase activity) is an active-site residue. N423 carries an N-linked (GlcNAc...) asparagine glycan. R431 and W433 together coordinate substrate. 2 N-linked (GlcNAc...) asparagine glycosylation sites follow: N494 and N501.

This sequence in the N-terminal section; belongs to the PMEI family. The protein in the C-terminal section; belongs to the pectinesterase family. Expressed in siliques.

The protein resides in the secreted. It is found in the cell wall. It carries out the reaction [(1-&gt;4)-alpha-D-galacturonosyl methyl ester](n) + n H2O = [(1-&gt;4)-alpha-D-galacturonosyl](n) + n methanol + n H(+). It participates in glycan metabolism; pectin degradation; 2-dehydro-3-deoxy-D-gluconate from pectin: step 1/5. In terms of biological role, acts in the modification of cell walls via demethylesterification of cell wall pectin. This chain is Probable pectinesterase/pectinesterase inhibitor 32 (PME32), found in Arabidopsis thaliana (Mouse-ear cress).